A 228-amino-acid chain; its full sequence is Ankyrin repeat domain-containing protein 46 (228 aa).

ANK repeat units follow at residues glutamine 11 to isoleucine 40, arginine 44 to threonine 74, glutamine 77 to isoleucine 103, and glutamine 107 to glycine 138. A helical membrane pass occupies residues valine 195–glycine 215.

It is found in the membrane. This chain is Ankyrin repeat domain-containing protein 46 (Ankrd46), found in Mus musculus (Mouse).